The following is a 390-amino-acid chain: S-adenosylmethionine synthase (390 aa).

Glu-12 serves as a coordination point for Mg(2+). His-18 is a binding site for ATP. K(+) is bound at residue Glu-46. Residues Glu-59 and Gln-102 each contribute to the L-methionine site. Residues 170–172 (DGK), 238–241 (SGRF), Asp-249, 255–256 (RK), Ala-272, Lys-276, and Lys-280 each bind ATP. Asp-249 lines the L-methionine pocket. An L-methionine-binding site is contributed by Lys-280.

Belongs to the AdoMet synthase family. Homotetramer. The cofactor is Mn(2+). It depends on Mg(2+) as a cofactor. Co(2+) serves as cofactor. Requires K(+) as cofactor.

It is found in the cytoplasm. It carries out the reaction L-methionine + ATP + H2O = S-adenosyl-L-methionine + phosphate + diphosphate. Its pathway is amino-acid biosynthesis; S-adenosyl-L-methionine biosynthesis; S-adenosyl-L-methionine from L-methionine: step 1/1. Catalyzes the formation of S-adenosylmethionine from methionine and ATP. The reaction comprises two steps that are both catalyzed by the same enzyme: formation of S-adenosylmethionine (AdoMet) and triphosphate, and subsequent hydrolysis of the triphosphate. This Chlamydomonas reinhardtii (Chlamydomonas smithii) protein is S-adenosylmethionine synthase (METM).